The primary structure comprises 531 residues: Na(+)/H(+) antiporter NhaB (531 aa).

The next 12 membrane-spanning stretches (helical) occupy residues 13-33, 34-54, 90-110, 121-141, 145-165, 206-226, 242-262, 308-328, 352-372, 394-414, 456-476, and 482-502; these read FLGK…IINP, LVFF…EFIF, LVAN…IYFM, ILIG…TAAF, FLDA…FYAI, LLMH…VGEP, FIIR…LTCV, VIAV…GLIG, EEAL…AVII, LALF…VFVG, GQAA…QLSY, and MALP…SFLL.

The protein belongs to the NhaB Na(+)/H(+) (TC 2.A.34) antiporter family.

Its subcellular location is the cell inner membrane. It catalyses the reaction 2 Na(+)(in) + 3 H(+)(out) = 2 Na(+)(out) + 3 H(+)(in). Its function is as follows. Na(+)/H(+) antiporter that extrudes sodium in exchange for external protons. This chain is Na(+)/H(+) antiporter NhaB, found in Aliivibrio salmonicida (strain LFI1238) (Vibrio salmonicida (strain LFI1238)).